Reading from the N-terminus, the 876-residue chain is Translation initiation factor IF-2 (876 aa).

The tr-type G domain occupies 378 to 547; it reads TRPPIITIMG…LTQSEMLELK (170 aa). Residues 387–394 form a G1 region; it reads GHVDHGKT. Residue 387 to 394 coordinates GTP; that stretch reads GHVDHGKT. Positions 412-416 are G2; sequence RITQH. Residues 433–436 form a G3 region; it reads DTPG. GTP contacts are provided by residues 433–437 and 487–490; these read DTPGH and NKID. The interval 487–490 is G4; sequence NKID. Positions 523 to 525 are G5; the sequence is SAK.

This sequence belongs to the TRAFAC class translation factor GTPase superfamily. Classic translation factor GTPase family. IF-2 subfamily.

It is found in the cytoplasm. Its function is as follows. One of the essential components for the initiation of protein synthesis. Protects formylmethionyl-tRNA from spontaneous hydrolysis and promotes its binding to the 30S ribosomal subunits. Also involved in the hydrolysis of GTP during the formation of the 70S ribosomal complex. The polypeptide is Translation initiation factor IF-2 (Buchnera aphidicola subsp. Baizongia pistaciae (strain Bp)).